Reading from the N-terminus, the 99-residue chain is A-type ATP synthase subunit F (99 aa).

This sequence belongs to the V-ATPase F subunit family. Has multiple subunits with at least A(3), B(3), C, D, E, F, H, I and proteolipid K(x).

The protein localises to the cell membrane. In terms of biological role, component of the A-type ATP synthase that produces ATP from ADP in the presence of a proton gradient across the membrane. This chain is A-type ATP synthase subunit F, found in Methanococcus vannielii (strain ATCC 35089 / DSM 1224 / JCM 13029 / OCM 148 / SB).